The primary structure comprises 439 residues: Deacetylvindoline O-acetyltransferase (439 aa).

His158 functions as the Proton acceptor in the catalytic mechanism. A coiled-coil region spans residues Thr317–Gln344. Asp380 functions as the Proton acceptor in the catalytic mechanism.

The protein belongs to the plant acyltransferase family. Monomer. As to expression, predominantly expressed in young leaves of mature plants. Low expression in stems and flowers and not detected in roots. Confined to the laticifer and idioblast cells of leaves, stems, and flower buds.

The protein localises to the cytoplasm. Its subcellular location is the nucleus. It carries out the reaction 4-O-deacetylvindoline + acetyl-CoA = vindoline + CoA. Its pathway is alkaloid biosynthesis; vindoline biosynthesis. In terms of biological role, involved in the biosynthesis of vindoline, a precursor of vinblastine and vincristine. This is Deacetylvindoline O-acetyltransferase from Catharanthus roseus (Madagascar periwinkle).